Consider the following 669-residue polypeptide: Zeaxanthin epoxidase, chloroplastic (669 aa).

The N-terminal 49 residues, 1–49, are a transit peptide targeting the chloroplast; sequence MYSTVFYTSVHPSTSVLSRKQLPLLISKDFSAELYHSLPCRSLENGHIN. Residues 87–115 and 365–378 each bind FAD; these read KVLV…LVFE and TFSW…LLGD. The region spanning 553-617 is the FHA domain; the sequence is IVLSRDEDVP…HGTWVTDNEG (65 aa).

Requires FAD as cofactor.

The protein resides in the plastid. It is found in the chloroplast. It catalyses the reaction all-trans-zeaxanthin + 4 reduced [2Fe-2S]-[ferredoxin] + 2 O2 + 4 H(+) = all-trans-violaxanthin + 4 oxidized [2Fe-2S]-[ferredoxin] + 2 H2O. Its pathway is plant hormone biosynthesis; abscisate biosynthesis. In terms of biological role, converts zeaxanthin into antheraxanthin and subsequently violaxanthin. Involved in the epoxidation of zeaxanthin. Plays an important role in resistance to stresses, seed development and dormancy. The polypeptide is Zeaxanthin epoxidase, chloroplastic (Solanum lycopersicum (Tomato)).